The following is a 502-amino-acid chain: Betaine aldehyde dehydrogenase, chloroplastic (502 aa).

The N-terminal 7 residues, M1–A7, are a transit peptide targeting the chloroplast. Position 240–245 (G240–G245) interacts with NAD(+). Catalysis depends on E262, which acts as the Proton acceptor. Catalysis depends on C296, which acts as the Nucleophile.

This sequence belongs to the aldehyde dehydrogenase family. As to quaternary structure, homodimer.

The protein resides in the plastid. It localises to the chloroplast. It catalyses the reaction betaine aldehyde + NAD(+) + H2O = glycine betaine + NADH + 2 H(+). It participates in amine and polyamine biosynthesis; betaine biosynthesis via choline pathway; betaine from betaine aldehyde: step 1/1. The sequence is that of Betaine aldehyde dehydrogenase, chloroplastic from Atriplex hortensis (Mountain spinach).